Consider the following 620-residue polypeptide: Glutathione-regulated potassium-efflux system protein KefC (620 aa).

12 consecutive transmembrane segments (helical) span residues 4–24 (HTLL…PIAV), 26–46 (LGLG…PWGL), 54–74 (SILH…GLEL), 90–110 (GALQ…FLGL), 114–134 (VAEL…MQAM), 149–169 (FAVL…IPLL), 178–198 (LGAF…VVLL), 218–238 (VFSA…EEVG), 270–290 (GLLL…GTLV), 294–314 (LRIL…LWLV), 327–347 (WFAV…GAAQ), and 359–379 (ALTL…MLLT). The RCK N-terminal domain occupies 399 to 518 (QPRVIVAGFG…AGVAMPERET (120 aa)). The disordered stretch occupies residues 599–620 (QGTAEGKHSGEAADEPEVKPSI).

This sequence belongs to the monovalent cation:proton antiporter 2 (CPA2) transporter (TC 2.A.37) family. KefC subfamily. In terms of assembly, homodimer. Interacts with the regulatory subunit KefF.

The protein resides in the cell inner membrane. Its function is as follows. Pore-forming subunit of a potassium efflux system that confers protection against electrophiles. Catalyzes K(+)/H(+) antiport. The protein is Glutathione-regulated potassium-efflux system protein KefC of Salmonella heidelberg (strain SL476).